Here is a 157-residue protein sequence, read N- to C-terminus: SsrA-binding protein (157 aa).

Belongs to the SmpB family.

It is found in the cytoplasm. Its function is as follows. Required for rescue of stalled ribosomes mediated by trans-translation. Binds to transfer-messenger RNA (tmRNA), required for stable association of tmRNA with ribosomes. tmRNA and SmpB together mimic tRNA shape, replacing the anticodon stem-loop with SmpB. tmRNA is encoded by the ssrA gene; the 2 termini fold to resemble tRNA(Ala) and it encodes a 'tag peptide', a short internal open reading frame. During trans-translation Ala-aminoacylated tmRNA acts like a tRNA, entering the A-site of stalled ribosomes, displacing the stalled mRNA. The ribosome then switches to translate the ORF on the tmRNA; the nascent peptide is terminated with the 'tag peptide' encoded by the tmRNA and targeted for degradation. The ribosome is freed to recommence translation, which seems to be the essential function of trans-translation. The sequence is that of SsrA-binding protein from Levilactobacillus brevis (strain ATCC 367 / BCRC 12310 / CIP 105137 / JCM 1170 / LMG 11437 / NCIMB 947 / NCTC 947) (Lactobacillus brevis).